The following is a 937-amino-acid chain: Valine--tRNA ligase (937 aa).

Positions 44–54 (PNVTGTLHMGH) match the 'HIGH' region motif. The 'KMSKS' region signature appears at 548 to 552 (KMSKS). Lys-551 is an ATP binding site. The stretch at 874-937 (AAETARLTKE…KLKAQLLKLA (64 aa)) forms a coiled coil.

It belongs to the class-I aminoacyl-tRNA synthetase family. ValS type 1 subfamily. As to quaternary structure, monomer.

Its subcellular location is the cytoplasm. It catalyses the reaction tRNA(Val) + L-valine + ATP = L-valyl-tRNA(Val) + AMP + diphosphate. Functionally, catalyzes the attachment of valine to tRNA(Val). As ValRS can inadvertently accommodate and process structurally similar amino acids such as threonine, to avoid such errors, it has a 'posttransfer' editing activity that hydrolyzes mischarged Thr-tRNA(Val) in a tRNA-dependent manner. The polypeptide is Valine--tRNA ligase (Laribacter hongkongensis (strain HLHK9)).